A 495-amino-acid chain; its full sequence is Geraniol 8-hydroxylase (495 aa).

A helical transmembrane segment spans residues 5-25; that stretch reads FLTIAIGFLFTITLYQALNFF. Position 438 (C438) interacts with heme.

This sequence belongs to the cytochrome P450 family. Requires heme as cofactor. In terms of tissue distribution, expressed in leaves, stems and roots.

The protein localises to the endoplasmic reticulum membrane. The catalysed reaction is (2E)-geraniol + reduced [NADPH--hemoprotein reductase] + O2 = (6E)-8-hydroxygeraniol + oxidized [NADPH--hemoprotein reductase] + H2O + H(+). In terms of biological role, hydroxylase involved in the biosynthesis of hydroxygeraniol, a precursor of the iridoid monoterpenoid swertiamarin. This chain is Geraniol 8-hydroxylase (CYP76B10), found in Swertia mussotii (Felwort).